Consider the following 128-residue polypeptide: B2 protein (128 aa).

Residues serine 1–alanine 10 form the signal peptide. 2 disulfide bridges follow: cysteine 26/cysteine 57 and cysteine 97/cysteine 114.

Belongs to the PBP/GOBP family. In terms of processing, N-glycosylated. In terms of tissue distribution, tubular accessory sex gland.

The protein resides in the secreted. May be a carrier protein for lipids. This is B2 protein from Tenebrio molitor (Yellow mealworm beetle).